A 207-amino-acid polypeptide reads, in one-letter code: Ribosomal RNA small subunit methyltransferase G (207 aa).

S-adenosyl-L-methionine is bound by residues Gly73, Leu78, 124-125 (VE), and Arg139.

It belongs to the methyltransferase superfamily. RNA methyltransferase RsmG family.

The protein localises to the cytoplasm. It carries out the reaction guanosine(527) in 16S rRNA + S-adenosyl-L-methionine = N(7)-methylguanosine(527) in 16S rRNA + S-adenosyl-L-homocysteine. Functionally, specifically methylates the N7 position of guanine in position 527 of 16S rRNA. This Salmonella agona (strain SL483) protein is Ribosomal RNA small subunit methyltransferase G.